A 273-amino-acid polypeptide reads, in one-letter code: NH(3)-dependent NAD(+) synthetase (273 aa).

Gly-46–Ser-53 serves as a coordination point for ATP. Asp-52 provides a ligand contact to Mg(2+). Arg-139 is a deamido-NAD(+) binding site. Thr-159 provides a ligand contact to ATP. Glu-164 is a Mg(2+) binding site. The deamido-NAD(+) site is built by Lys-172 and Asp-179. ATP contacts are provided by Lys-188 and Thr-210. Deamido-NAD(+) is bound at residue His-259–Lys-260.

The protein belongs to the NAD synthetase family. In terms of assembly, homodimer.

The enzyme catalyses deamido-NAD(+) + NH4(+) + ATP = AMP + diphosphate + NAD(+) + H(+). The protein operates within cofactor biosynthesis; NAD(+) biosynthesis; NAD(+) from deamido-NAD(+) (ammonia route): step 1/1. Catalyzes the ATP-dependent amidation of deamido-NAD to form NAD. Uses ammonia as a nitrogen source. In Streptococcus agalactiae serotype Ia (strain ATCC 27591 / A909 / CDC SS700), this protein is NH(3)-dependent NAD(+) synthetase.